The chain runs to 119 residues: Large ribosomal subunit protein bL20 (119 aa).

It belongs to the bacterial ribosomal protein bL20 family.

Its function is as follows. Binds directly to 23S ribosomal RNA and is necessary for the in vitro assembly process of the 50S ribosomal subunit. It is not involved in the protein synthesizing functions of that subunit. This is Large ribosomal subunit protein bL20 from Ruthia magnifica subsp. Calyptogena magnifica.